Reading from the N-terminus, the 135-residue chain is Small ribosomal subunit protein bS6 (135 aa).

A compositionally biased stretch (polar residues) spans glutamine 99 to threonine 120. Positions glutamine 99–alanine 135 are disordered.

It belongs to the bacterial ribosomal protein bS6 family.

Functionally, binds together with bS18 to 16S ribosomal RNA. The chain is Small ribosomal subunit protein bS6 from Synechococcus sp. (strain RCC307).